A 234-amino-acid chain; its full sequence is Octanoyltransferase (234 aa).

The BPL/LPL catalytic domain occupies 42–226 (PDTPDEFWVV…ELASLIGYET (185 aa)). Substrate is bound by residues 81 to 88 (RGGQVTYH), 157 to 159 (SLG), and 170 to 172 (GLA). The active-site Acyl-thioester intermediate is Cys188.

This sequence belongs to the LipB family.

It is found in the cytoplasm. It catalyses the reaction octanoyl-[ACP] + L-lysyl-[protein] = N(6)-octanoyl-L-lysyl-[protein] + holo-[ACP] + H(+). It participates in protein modification; protein lipoylation via endogenous pathway; protein N(6)-(lipoyl)lysine from octanoyl-[acyl-carrier-protein]: step 1/2. Catalyzes the transfer of endogenously produced octanoic acid from octanoyl-acyl-carrier-protein onto the lipoyl domains of lipoate-dependent enzymes. Lipoyl-ACP can also act as a substrate although octanoyl-ACP is likely to be the physiological substrate. This is Octanoyltransferase from Aeromonas hydrophila subsp. hydrophila (strain ATCC 7966 / DSM 30187 / BCRC 13018 / CCUG 14551 / JCM 1027 / KCTC 2358 / NCIMB 9240 / NCTC 8049).